The sequence spans 524 residues: Serine/threonine-protein kinase PAK 2 (524 aa).

The tract at residues 1–81 (MSDNGELEDK…PEISPPSDFE (81 aa)) is disordered. At Ser-2 the chain carries N-acetylserine. 4 positions are modified to phosphoserine: Ser-2, Ser-20, Ser-55, and Ser-58. At Thr-60 the chain carries Phosphothreonine. Position 62 is an N6-acetyllysine (Lys-62). Ser-64 bears the Phosphoserine mark. Over residues 67 to 81 (KEKERPEISPPSDFE) the composition is skewed to basic and acidic residues. The GTPase-binding stretch occupies residues 69–112 (KERPEISPPSDFEHTIHVGFDAVTGEFTGMPEQWARLLQTSNIT). The segment at 69 to 137 (KERPEISPPS…KFYDSNTVKQ (69 aa)) is autoregulatory region. The 14-residue stretch at 74-87 (ISPPSDFEHTIHVG) folds into the CRIB domain. Lys-128 carries the post-translational modification N6-acetyllysine. Thr-134 carries the post-translational modification Phosphothreonine. At Tyr-139 the chain carries Phosphotyrosine. Position 141 is a phosphoserine (Ser-141). Thr-143 carries the post-translational modification Phosphothreonine. 2 disordered regions span residues 143 to 164 (TPPE…GTEA) and 169 to 188 (TEEE…PRPD). At Ser-152 the chain carries Phosphoserine. Thr-154 and Thr-169 each carry phosphothreonine. The segment covering 169 to 178 (TEEEDDDEET) has biased composition (acidic residues). Ser-197 is subject to Phosphoserine. Residue Gly-213 is the site of N-myristoyl glycine; in form PAK-2p34 attachment. The Nuclear localization signal motif lies at 245–251 (PKKKYTR). A Protein kinase domain is found at 249–499 (YTRYEKIGQG…SAKELLQHPF (251 aa)). Residues 255-263 (IGQGASGTV) and Lys-278 each bind ATP. Arg-367 serves as the catalytic Proton acceptor. Thr-402 is modified (phosphothreonine; by autocatalysis).

It belongs to the protein kinase superfamily. STE Ser/Thr protein kinase family. STE20 subfamily. As to quaternary structure, interacts tightly with GTP-bound but not GDP-bound CDC42/p21 and RAC1. Interacts with SH3MD4. Interacts with SCRIB. Interacts with ARHGEF7 and GIT1. PAK-2p34 interacts with ARHGAP10. (Microbial infection) Interacts with and activated by HIV-1 Nef. In terms of processing, full-length PAK2 is autophosphorylated when activated by CDC42/p21. Following cleavage, both peptides, PAK-2p27 and PAK-2p34, become highly autophosphorylated, with PAK-2p27 being phosphorylated on serine and PAK-2p34 on threonine residues, respectively. Autophosphorylation of PAK-2p27 can occur in the absence of any effectors and is dependent on phosphorylation of Thr-402, because PAK-2p27 is acting as an exogenous substrate. Post-translationally, during apoptosis proteolytically cleaved by caspase-3 or caspase-3-like proteases to yield active PAK-2p34. Ubiquitinated, leading to its proteasomal degradation. In terms of processing, PAK-2p34 is myristoylated. In terms of tissue distribution, ubiquitously expressed. Higher levels seen in skeletal muscle, ovary, thymus and spleen.

The protein localises to the cytoplasm. The protein resides in the nucleus. It localises to the perinuclear region. Its subcellular location is the membrane. It carries out the reaction L-seryl-[protein] + ATP = O-phospho-L-seryl-[protein] + ADP + H(+). The enzyme catalyses L-threonyl-[protein] + ATP = O-phospho-L-threonyl-[protein] + ADP + H(+). Its activity is regulated as follows. Activated by binding small G proteins. Binding of GTP-bound CDC42 or RAC1 to the autoregulatory region releases monomers from the autoinhibited dimer, enables phosphorylation of Thr-402 and allows the kinase domain to adopt an active structure. Following caspase cleavage, autophosphorylated PAK-2p34 is constitutively active. Its function is as follows. Serine/threonine protein kinase that plays a role in a variety of different signaling pathways including cytoskeleton regulation, cell motility, cell cycle progression, apoptosis or proliferation. Acts as a downstream effector of the small GTPases CDC42 and RAC1. Activation by the binding of active CDC42 and RAC1 results in a conformational change and a subsequent autophosphorylation on several serine and/or threonine residues. Full-length PAK2 stimulates cell survival and cell growth. Phosphorylates MAPK4 and MAPK6 and activates the downstream target MAPKAPK5, a regulator of F-actin polymerization and cell migration. Phosphorylates JUN and plays an important role in EGF-induced cell proliferation. Phosphorylates many other substrates including histone H4 to promote assembly of H3.3 and H4 into nucleosomes, BAD, ribosomal protein S6, or MBP. Phosphorylates CASP7, thereby preventing its activity. Additionally, associates with ARHGEF7 and GIT1 to perform kinase-independent functions such as spindle orientation control during mitosis. On the other hand, apoptotic stimuli such as DNA damage lead to caspase-mediated cleavage of PAK2, generating PAK-2p34, an active p34 fragment that translocates to the nucleus and promotes cellular apoptosis involving the JNK signaling pathway. Caspase-activated PAK2 phosphorylates MKNK1 and reduces cellular translation. This chain is Serine/threonine-protein kinase PAK 2 (PAK2), found in Homo sapiens (Human).